We begin with the raw amino-acid sequence, 672 residues long: Acetyl-coenzyme A synthetase (672 aa).

Residues 217 to 220 and Thr335 each bind CoA; that span reads RRGK. ATP contacts are provided by residues 411–413, 435–440, Asp529, Arg544, and Arg555; these read GEP and DTWWQT. The Mg(2+) site is built by Val566, His568, and Ile571. Residue Arg613 participates in CoA binding. An N6-acetyllysine modification is found at Lys638.

The protein belongs to the ATP-dependent AMP-binding enzyme family. Mg(2+) is required as a cofactor. Acetylated. Deacetylation by the SIR2-homolog deacetylase activates the enzyme. Post-translationally, the N-terminus is blocked.

The enzyme catalyses acetate + ATP + CoA = acetyl-CoA + AMP + diphosphate. Its function is as follows. Catalyzes the conversion of acetate into acetyl-CoA (AcCoA), an essential intermediate at the junction of anabolic and catabolic pathways. AcsA undergoes a two-step reaction. In the first half reaction, AcsA combines acetate with ATP to form acetyl-adenylate (AcAMP) intermediate. In the second half reaction, it can then transfer the acetyl group from AcAMP to the sulfhydryl group of CoA, forming the product AcCoA. This Methanothrix soehngenii (Methanosaeta concilii) protein is Acetyl-coenzyme A synthetase.